We begin with the raw amino-acid sequence, 312 residues long: MPLRLVFMGTPDFAVPTLLALSAYGHDIAAVYSREPKPAGRGMKLQHSPVAQEAQRLGIPVLTPKTLRTDEALAEFRSHEADAAVVVAYGMILPQAILDAPKLGCYNLHGSLLPRWRGAAPLNRAIMAGDAESGVMVMKMDVGLDTGDVAMAERIAITDAMTVTDLHDALARLGADLMVRAMAALERGGLQLARQSEHGVSYAAKIDKAEAKIDFARPAQAVLRHIHGLSPFPGAWCELPIDGEAVRVKILRCALADGRGAPGEMLGDDLTIACADGAIRVLQLQRAGKQPMSADEFLRGTPIAKGVRVSSS.

111 to 114 (SLLP) serves as a coordination point for (6S)-5,6,7,8-tetrahydrofolate.

Belongs to the Fmt family.

It catalyses the reaction L-methionyl-tRNA(fMet) + (6R)-10-formyltetrahydrofolate = N-formyl-L-methionyl-tRNA(fMet) + (6S)-5,6,7,8-tetrahydrofolate + H(+). Its function is as follows. Attaches a formyl group to the free amino group of methionyl-tRNA(fMet). The formyl group appears to play a dual role in the initiator identity of N-formylmethionyl-tRNA by promoting its recognition by IF2 and preventing the misappropriation of this tRNA by the elongation apparatus. In Rhodopseudomonas palustris (strain HaA2), this protein is Methionyl-tRNA formyltransferase.